A 185-amino-acid polypeptide reads, in one-letter code: uncharacterized protein (185 aa).

Residues 1-29 (MKLFSRTSLVALGTAAAITLSGVTAPAFA) form the signal peptide. Positions 41–66 (KTAEDNTPEAPGASTPLKLEQPGTIT) are disordered.

Glycosylated; by Pmt.

It localises to the secreted. This is an uncharacterized protein from Corynebacterium glutamicum (strain ATCC 13032 / DSM 20300 / JCM 1318 / BCRC 11384 / CCUG 27702 / LMG 3730 / NBRC 12168 / NCIMB 10025 / NRRL B-2784 / 534).